Reading from the N-terminus, the 136-residue chain is DNA-directed RNA polymerase subunit omega (136 aa).

The segment at 79–107 is disordered; the sequence is EPEAETVPLLSSSPAAAAVAPQSSSDDAA. Residues 89 to 107 are compositionally biased toward low complexity; that stretch reads SSSPAAAAVAPQSSSDDAA.

The protein belongs to the RNA polymerase subunit omega family. In terms of assembly, the RNAP catalytic core consists of 2 alpha, 1 beta, 1 beta' and 1 omega subunit. When a sigma factor is associated with the core the holoenzyme is formed, which can initiate transcription.

It catalyses the reaction RNA(n) + a ribonucleoside 5'-triphosphate = RNA(n+1) + diphosphate. Its function is as follows. Promotes RNA polymerase assembly. Latches the N- and C-terminal regions of the beta' subunit thereby facilitating its interaction with the beta and alpha subunits. The protein is DNA-directed RNA polymerase subunit omega of Methylobacterium radiotolerans (strain ATCC 27329 / DSM 1819 / JCM 2831 / NBRC 15690 / NCIMB 10815 / 0-1).